We begin with the raw amino-acid sequence, 264 residues long: 3-methyl-2-oxobutanoate hydroxymethyltransferase (264 aa).

Mg(2+)-binding residues include aspartate 45 and aspartate 84. 3-methyl-2-oxobutanoate-binding positions include 45–46 (DS), aspartate 84, and lysine 112. Mg(2+) is bound at residue glutamate 114. Glutamate 181 (proton acceptor) is an active-site residue.

Belongs to the PanB family. Homodecamer; pentamer of dimers. Requires Mg(2+) as cofactor.

The protein localises to the cytoplasm. The catalysed reaction is 3-methyl-2-oxobutanoate + (6R)-5,10-methylene-5,6,7,8-tetrahydrofolate + H2O = 2-dehydropantoate + (6S)-5,6,7,8-tetrahydrofolate. The protein operates within cofactor biosynthesis; (R)-pantothenate biosynthesis; (R)-pantoate from 3-methyl-2-oxobutanoate: step 1/2. Its function is as follows. Catalyzes the reversible reaction in which hydroxymethyl group from 5,10-methylenetetrahydrofolate is transferred onto alpha-ketoisovalerate to form ketopantoate. This is 3-methyl-2-oxobutanoate hydroxymethyltransferase from Shigella flexneri serotype 5b (strain 8401).